The sequence spans 467 residues: Probable amino acid permease 7 (467 aa).

Residues 1–29 (MDIKEDDESRVITPTELQLHDSVTARTGT) lie on the Cytoplasmic side of the membrane. Residues 30–50 (LWTAVAHIITGVIGAGVLSLA) form a helical membrane-spanning segment. The Extracellular segment spans residues 51–58 (WATAELGW). A helical membrane pass occupies residues 59–79 (IAGPAALIAFAGVTLLSAFLL). The Cytoplasmic segment spans residues 80-111 (SDCYRFPDPNNGPLRLNSYSQAVKLYLGKKNE). A helical transmembrane segment spans residues 112–132 (IVCGVVVYISLFGCGIAYTIV). The Extracellular segment spans residues 133–163 (IATCSRAIMKSNCYHRNGHNATCSYGDNNNY). Helical transmembrane passes span 164–184 (FMVL…FHNM) and 185–205 (VWLS…GIGL). Residues 206-231 (ALGKIIENRKIEGSIRGIPAENRGEK) are Extracellular-facing. A helical transmembrane segment spans residues 232–252 (VWIVFQALGNIAFSYPFSIIL). The Cytoplasmic portion of the chain corresponds to 253 to 274 (LEIQDTLRSPPAEKQTMKKAST). Residues 275–295 (VAVFIQTFFFFCCGCFGYAAF) traverse the membrane as a helical segment. Over 296-312 (GDSTPGNLLTGFGFYEP) the chain is Extracellular. Residues 313–333 (FWLVDFANACIVLHLVGGYQV) traverse the membrane as a helical segment. Topologically, residues 334 to 383 (YSQPIFAAAERSLTKKYPENKFIARFYGFKLPLLRGETVRLNPMRMCLRT) are cytoplasmic. Helical transmembrane passes span 384–404 (MYVL…EVLG) and 405–425 (VVGA…MCIL). Residues 426 to 443 (QKKIRSWTRPWLLLRGFS) lie on the Cytoplasmic side of the membrane. Residues 444 to 464 (FVCLLVCLLSLVGSIYGLVGA) form a helical membrane-spanning segment. Topologically, residues 465 to 467 (KFG) are extracellular.

This sequence belongs to the amino acid/polyamine transporter 2 family. Amino acid/auxin permease (AAAP) (TC 2.A.18.2) subfamily.

The protein localises to the cell membrane. Amino acid-proton symporter. Stereospecific transporter with a broad specificity for neutral amino acids. In Arabidopsis thaliana (Mouse-ear cress), this protein is Probable amino acid permease 7 (AAP7).